We begin with the raw amino-acid sequence, 118 residues long: uncharacterized protein (118 aa).

It belongs to the transposase IS3/IS150/IS904 family.

This is an uncharacterized protein from Haemophilus influenzae (strain ATCC 51907 / DSM 11121 / KW20 / Rd).